The sequence spans 240 residues: Ribonuclease PH (240 aa).

Residues Arg87 and 125–127 (GTR) contribute to the phosphate site.

It belongs to the RNase PH family. In terms of assembly, homohexameric ring arranged as a trimer of dimers.

The catalysed reaction is tRNA(n+1) + phosphate = tRNA(n) + a ribonucleoside 5'-diphosphate. In terms of biological role, phosphorolytic 3'-5' exoribonuclease that plays an important role in tRNA 3'-end maturation. Removes nucleotide residues following the 3'-CCA terminus of tRNAs; can also add nucleotides to the ends of RNA molecules by using nucleoside diphosphates as substrates, but this may not be physiologically important. Probably plays a role in initiation of 16S rRNA degradation (leading to ribosome degradation) during starvation. In Pseudomonas fluorescens (strain Pf0-1), this protein is Ribonuclease PH.